Consider the following 137-residue polypeptide: ATP synthase epsilon chain (137 aa).

The protein belongs to the ATPase epsilon chain family. F-type ATPases have 2 components, CF(1) - the catalytic core - and CF(0) - the membrane proton channel. CF(1) has five subunits: alpha(3), beta(3), gamma(1), delta(1), epsilon(1). CF(0) has three main subunits: a, b and c.

The protein localises to the cell membrane. Its function is as follows. Produces ATP from ADP in the presence of a proton gradient across the membrane. The chain is ATP synthase epsilon chain from Syntrophomonas wolfei subsp. wolfei (strain DSM 2245B / Goettingen).